The sequence spans 501 residues: Betaine aldehyde dehydrogenase, chloroplastic (501 aa).

Residues 1 to 7 (MAIRVPS) constitute a chloroplast transit peptide. NAD(+) is bound at residue 238 to 243 (GSTATG). The Proton acceptor role is filled by Glu-260. The Nucleophile role is filled by Cys-294.

This sequence belongs to the aldehyde dehydrogenase family. Homodimer.

The protein resides in the plastid. It localises to the chloroplast. It catalyses the reaction betaine aldehyde + NAD(+) + H2O = glycine betaine + NADH + 2 H(+). Its pathway is amine and polyamine biosynthesis; betaine biosynthesis via choline pathway; betaine from betaine aldehyde: step 1/1. This is Betaine aldehyde dehydrogenase, chloroplastic (BADH4) from Amaranthus hypochondriacus (Prince-of-Wales feather).